A 225-amino-acid chain; its full sequence is Biosynthetic peptidoglycan transglycosylase (225 aa).

The helical transmembrane segment at 8–28 (VLLIFIGAILLIQLWIFSSLV) threads the bilayer.

This sequence belongs to the glycosyltransferase 51 family.

It is found in the cell inner membrane. The enzyme catalyses [GlcNAc-(1-&gt;4)-Mur2Ac(oyl-L-Ala-gamma-D-Glu-L-Lys-D-Ala-D-Ala)](n)-di-trans,octa-cis-undecaprenyl diphosphate + beta-D-GlcNAc-(1-&gt;4)-Mur2Ac(oyl-L-Ala-gamma-D-Glu-L-Lys-D-Ala-D-Ala)-di-trans,octa-cis-undecaprenyl diphosphate = [GlcNAc-(1-&gt;4)-Mur2Ac(oyl-L-Ala-gamma-D-Glu-L-Lys-D-Ala-D-Ala)](n+1)-di-trans,octa-cis-undecaprenyl diphosphate + di-trans,octa-cis-undecaprenyl diphosphate + H(+). It functions in the pathway cell wall biogenesis; peptidoglycan biosynthesis. Functionally, peptidoglycan polymerase that catalyzes glycan chain elongation from lipid-linked precursors. The chain is Biosynthetic peptidoglycan transglycosylase from Acinetobacter baumannii (strain AB307-0294).